A 144-amino-acid polypeptide reads, in one-letter code: Transcription antitermination protein NusB (144 aa).

This sequence belongs to the NusB family.

Its function is as follows. Involved in transcription antitermination. Required for transcription of ribosomal RNA (rRNA) genes. Binds specifically to the boxA antiterminator sequence of the ribosomal RNA (rrn) operons. This is Transcription antitermination protein NusB from Haemophilus influenzae (strain 86-028NP).